A 599-amino-acid chain; its full sequence is UvrABC system protein C (599 aa).

The GIY-YIG domain occupies 15–93; that stretch reads DNPGVYQYYD…IKTLQPRYNI (79 aa). The region spanning 207 to 242 is the UVR domain; it reads KDSMKDFKKVMTNLAQNMHFEEAQKIKEKIEILENY.

This sequence belongs to the UvrC family. As to quaternary structure, interacts with UvrB in an incision complex.

The protein localises to the cytoplasm. Its function is as follows. The UvrABC repair system catalyzes the recognition and processing of DNA lesions. UvrC both incises the 5' and 3' sides of the lesion. The N-terminal half is responsible for the 3' incision and the C-terminal half is responsible for the 5' incision. In Flavobacterium psychrophilum (strain ATCC 49511 / DSM 21280 / CIP 103535 / JIP02/86), this protein is UvrABC system protein C.